Reading from the N-terminus, the 677-residue chain is UvrABC system protein B (677 aa).

The Helicase ATP-binding domain occupies 24–412 (EGVLEGVPAQ…EGIVVEQVIR (389 aa)). Position 37 to 44 (37 to 44 (GVTGSGKT)) interacts with ATP. The Beta-hairpin motif lies at 90 to 113 (YYDYYQPEAYLPSSDTYIEKDLAI). The 163-residue stretch at 429–591 (QIDDLMEEIQ…ITPQQIKKAR (163 aa)) folds into the Helicase C-terminal domain. Residues 635-670 (EKSMERTRKLMQEAAKKLEFIEAAQYRDELLKMEDL) enclose the UVR domain.

The protein belongs to the UvrB family. In terms of assembly, forms a heterotetramer with UvrA during the search for lesions. Interacts with UvrC in an incision complex.

The protein resides in the cytoplasm. Functionally, the UvrABC repair system catalyzes the recognition and processing of DNA lesions. A damage recognition complex composed of 2 UvrA and 2 UvrB subunits scans DNA for abnormalities. Upon binding of the UvrA(2)B(2) complex to a putative damaged site, the DNA wraps around one UvrB monomer. DNA wrap is dependent on ATP binding by UvrB and probably causes local melting of the DNA helix, facilitating insertion of UvrB beta-hairpin between the DNA strands. Then UvrB probes one DNA strand for the presence of a lesion. If a lesion is found the UvrA subunits dissociate and the UvrB-DNA preincision complex is formed. This complex is subsequently bound by UvrC and the second UvrB is released. If no lesion is found, the DNA wraps around the other UvrB subunit that will check the other stand for damage. This is UvrABC system protein B from Bacteroides fragilis (strain YCH46).